A 385-amino-acid polypeptide reads, in one-letter code: Putative RNA methyltransferase YpsC (385 aa).

Residues 44 to 156 enclose the THUMP domain; that stretch reads AICRANLWLR…KDQALITLDS (113 aa).

It belongs to the methyltransferase superfamily. As to quaternary structure, interacts with the RNA polymerase core.

The polypeptide is Putative RNA methyltransferase YpsC (ypsC) (Bacillus subtilis (strain 168)).